Reading from the N-terminus, the 164-residue chain is General odorant-binding protein 1 (164 aa).

A signal peptide spans 1-18 (MWKLVVVLTVNLLQGALT). 3 disulfides stabilise this stretch: Cys37–Cys72, Cys68–Cys126, and Cys115–Cys135.

It belongs to the PBP/GOBP family. Homodimer. Antenna.

Its function is as follows. Present in the aqueous fluid surrounding olfactory sensory dendrites and are thought to aid in the capture and transport of hydrophobic odorants into and through this fluid. The chain is General odorant-binding protein 1 from Bombyx mori (Silk moth).